Here is a 112-residue protein sequence, read N- to C-terminus: uncharacterized protein (112 aa).

Residues 91 to 112 form a disordered region; the sequence is ENQRKKGTRKRRSSEVDSKEKS. Basic and acidic residues predominate over residues 103 to 112; the sequence is SSEVDSKEKS.

This is an uncharacterized protein from Caenorhabditis elegans.